Here is a 141-residue protein sequence, read N- to C-terminus: Oleosin L (141 aa).

The next 3 helical transmembrane spans lie at 23–43, 46–66, and 74–94; these read VLFFVVMGGGVLASLSALALA, VVLMLILTPVFLLLSPVILPV, and AAAFMAAVTIGIAGAAALIWV. Residues 54–65 carry the Proline-knot motif; the sequence is PVFLLLSPVILP.

This sequence belongs to the oleosin family. Expressed in megagametophytes (at protein level).

The protein resides in the lipid droplet. Its subcellular location is the membrane. The chain is Oleosin L from Pinus massoniana (Chinese red pine).